A 740-amino-acid chain; its full sequence is Ion-translocating oxidoreductase complex subunit C (740 aa).

4Fe-4S ferredoxin-type domains follow at residues 369–397 (GEPQEEQSCIRCSACADACPADLLPQQLY) and 407–436 (KATTHNIADCIECGACAWVCPSNIPLVQYF). The [4Fe-4S] cluster site is built by Cys377, Cys380, Cys383, Cys387, Cys416, Cys419, Cys422, and Cys426. Positions 602-714 (KLEQQQANAE…NAEPEEQIDP (113 aa)) are disordered. Residues 605–615 (QQQANAEPEQQ) are compositionally biased toward low complexity.

It belongs to the 4Fe4S bacterial-type ferredoxin family. RnfC subfamily. In terms of assembly, the complex is composed of six subunits: RsxA, RsxB, RsxC, RsxD, RsxE and RsxG. It depends on [4Fe-4S] cluster as a cofactor.

The protein localises to the cell inner membrane. Part of a membrane-bound complex that couples electron transfer with translocation of ions across the membrane. Required to maintain the reduced state of SoxR. In Escherichia coli O17:K52:H18 (strain UMN026 / ExPEC), this protein is Ion-translocating oxidoreductase complex subunit C.